A 505-amino-acid chain; its full sequence is Aminoaldehyde dehydrogenase 2 (505 aa).

The Na(+) site is built by Ile-31 and Asp-99. NAD(+)-binding positions include 159 to 161 (TPW) and 185 to 188 (KPSE). Residue Leu-189 coordinates Na(+). 238–242 (GSGPT) provides a ligand contact to NAD(+). The Proton acceptor role is filled by Glu-260. An NAD(+)-binding site is contributed by Leu-261. Cys-295 functions as the Nucleophile in the catalytic mechanism. NAD(+)-binding residues include Glu-394 and Trp-460.

Belongs to the aldehyde dehydrogenase family. Forms homodimers.

The catalysed reaction is 4-aminobutanal + NAD(+) + H2O = 4-aminobutanoate + NADH + 2 H(+). It catalyses the reaction 3-aminopropanal + NAD(+) + H2O = beta-alanine + NADH + 2 H(+). It carries out the reaction 4-(trimethylamino)butanal + NAD(+) + H2O = 4-(trimethylamino)butanoate + NADH + 2 H(+). The enzyme catalyses 4-guanidinobutanal + NAD(+) + H2O = 4-guanidinobutanoate + NADH + 2 H(+). Its pathway is amine and polyamine biosynthesis; betaine biosynthesis via choline pathway; betaine from betaine aldehyde: step 1/1. In terms of biological role, dehydrogenase that catalyzes the oxidation of several aminoaldehydes. Metabolizes and detoxifies aldehyde products of polyamine degradation to non-toxic amino acids. Catalyzes the oxidation of 4-aminobutanal and 3-aminopropanal to 4-aminobutanoate and beta-alanine, respectively. Catalyzes the oxidation of 4-(trimethylamino)butanal and 4-guanidinobutanal to 4-trimethylammoniobutanoate and 4-guanidinobutanoate, respectively. This is Aminoaldehyde dehydrogenase 2 from Solanum lycopersicum (Tomato).